Consider the following 454-residue polypeptide: Protoheme IX farnesyltransferase 1 (454 aa).

The segment at 1–186 (MRTTGFSGLL…AYFELTKPRL (186 aa)) is unknown. Helical transmembrane passes span 9-29 (LLSA…TAAL), 59-79 (GVAA…WSET), 87-107 (LALA…VATG), and 113-133 (LHLF…AWHL). Residues 137-164 (TGSDDAPESPPELAPPVDEEPAATEQPA) form a disordered region. 9 consecutive transmembrane segments (helical) span residues 186–206 (LMWL…TPTV), 209–229 (VVFT…FNHV), 251–271 (VPVA…LWAF), 276–296 (LLAA…YTLI), 300–320 (NTVQ…LIGY), 321–341 (AAVT…IFLW), 377–397 (HIVF…AVTD), 398–418 (LGWL…WAVV), and 433–453 (FHAS…DSLA). Positions 187 to 451 (MWLLCLVAGA…LVLVAILIDS (265 aa)) are protoheme IX prenyltransferase.

In the C-terminal section; belongs to the UbiA prenyltransferase family. Protoheme IX farnesyltransferase subfamily.

It localises to the cell membrane. The catalysed reaction is heme b + (2E,6E)-farnesyl diphosphate + H2O = Fe(II)-heme o + diphosphate. Its pathway is porphyrin-containing compound metabolism; heme O biosynthesis; heme O from protoheme: step 1/1. Its function is as follows. Converts heme B (protoheme IX) to heme O by substitution of the vinyl group on carbon 2 of heme B porphyrin ring with a hydroxyethyl farnesyl side group. The chain is Protoheme IX farnesyltransferase 1 (ctaB1) from Natronomonas pharaonis (strain ATCC 35678 / DSM 2160 / CIP 103997 / JCM 8858 / NBRC 14720 / NCIMB 2260 / Gabara) (Halobacterium pharaonis).